A 119-amino-acid polypeptide reads, in one-letter code: Holo-[acyl-carrier-protein] synthase (119 aa).

Aspartate 8 and glutamate 59 together coordinate Mg(2+).

This sequence belongs to the P-Pant transferase superfamily. AcpS family. Requires Mg(2+) as cofactor.

The protein resides in the cytoplasm. The catalysed reaction is apo-[ACP] + CoA = holo-[ACP] + adenosine 3',5'-bisphosphate + H(+). In terms of biological role, transfers the 4'-phosphopantetheine moiety from coenzyme A to a Ser of acyl-carrier-protein. The sequence is that of Holo-[acyl-carrier-protein] synthase from Staphylococcus aureus (strain JH1).